The chain runs to 214 residues: Adenylate kinase (214 aa).

ATP is bound at residue 10–15 (GAGKGT). Residues 30–59 (STGDMLRAAIKAGSELGQKAKILMDMGQLV) are NMP. Residues threonine 31, arginine 36, 57-59 (QLV), 85-88 (GFPR), and glutamine 92 contribute to the AMP site. The interval 122–159 (GRRVHPASGRTYHIVYNPPKVEDKDDITGEDLILRADD) is LID. ATP-binding positions include arginine 123 and 132–133 (TY). Residues arginine 156 and arginine 167 each contribute to the AMP site. Residue glutamine 200 participates in ATP binding.

The protein belongs to the adenylate kinase family. Monomer.

The protein resides in the cytoplasm. It carries out the reaction AMP + ATP = 2 ADP. Its pathway is purine metabolism; AMP biosynthesis via salvage pathway; AMP from ADP: step 1/1. Catalyzes the reversible transfer of the terminal phosphate group between ATP and AMP. Plays an important role in cellular energy homeostasis and in adenine nucleotide metabolism. The polypeptide is Adenylate kinase (Histophilus somni (strain 129Pt) (Haemophilus somnus)).